We begin with the raw amino-acid sequence, 593 residues long: ABC1 family protein lscO (593 aa).

2 disordered regions span residues 1–29 (MDVA…GGKK) and 441–467 (PYKN…EERK). Composition is skewed to basic and acidic residues over residues 8–22 (MERH…DDGT) and 457–467 (QRTKETPEERK).

This sequence belongs to the protein kinase superfamily. ADCK protein kinase family.

In terms of biological role, ABC1 family protein; part of the gene cluster that mediates the biosynthesis of the lipopeptide antibiotics leucinostatins that show extensive biological activities, including antimalarial, antiviral, antibacterial, antifungal, and antitumor activities, as well as phytotoxic. The function of lcsO within the leucinostatins biosynthesis has not been identified yet. This Purpureocillium lilacinum (Paecilomyces lilacinus) protein is ABC1 family protein lscO.